The following is a 467-amino-acid chain: Ribosomal RNA small subunit methyltransferase F (467 aa).

Residues 119-125, E143, D170, and D188 contribute to the S-adenosyl-L-methionine site; that span reads ASAPGSK. C241 functions as the Nucleophile in the catalytic mechanism.

It belongs to the class I-like SAM-binding methyltransferase superfamily. RsmB/NOP family.

The protein localises to the cytoplasm. The enzyme catalyses cytidine(1407) in 16S rRNA + S-adenosyl-L-methionine = 5-methylcytidine(1407) in 16S rRNA + S-adenosyl-L-homocysteine + H(+). Specifically methylates the cytosine at position 1407 (m5C1407) of 16S rRNA. The protein is Ribosomal RNA small subunit methyltransferase F of Shewanella amazonensis (strain ATCC BAA-1098 / SB2B).